The chain runs to 470 residues: Cell division protein FtsP (470 aa).

Residues 1-29 (MKNCSRRQLLKTTLFSTALFSVPAPLLAA) constitute a signal peptide (tat-type signal).

It belongs to the FtsP family. Predicted to be exported by the Tat system. The position of the signal peptide cleavage has not been experimentally proven.

It is found in the periplasm. In terms of biological role, cell division protein that is required for growth during stress conditions. May be involved in protecting or stabilizing the divisomal assembly under conditions of stress. In Aggregatibacter aphrophilus (strain NJ8700) (Haemophilus aphrophilus), this protein is Cell division protein FtsP.